The sequence spans 901 residues: Probable inorganic carbon transporter subunit DabA (901 aa).

4 residues coordinate Zn(2+): C424, D426, H606, and C621.

It belongs to the inorganic carbon transporter (TC 9.A.2) DabA family. Forms a complex with DabB. Zn(2+) is required as a cofactor.

Its subcellular location is the cell membrane. Part of an energy-coupled inorganic carbon pump. The sequence is that of Probable inorganic carbon transporter subunit DabA from Staphylococcus aureus (strain USA300).